The primary structure comprises 124 residues: Small ribosomal subunit protein uS12 (124 aa).

The segment at 1 to 32 (MPTIQQLVRKGRKDKATKTKTPALKGSPQRRG) is disordered. A 3-methylthioaspartic acid modification is found at D89. The disordered stretch occupies residues 105 to 124 (QGVRGRQQARSRYGAKKEKK). The segment covering 111-124 (QQARSRYGAKKEKK) has biased composition (basic residues).

It belongs to the universal ribosomal protein uS12 family. As to quaternary structure, part of the 30S ribosomal subunit. Contacts proteins S8 and S17. May interact with IF1 in the 30S initiation complex.

With S4 and S5 plays an important role in translational accuracy. In terms of biological role, interacts with and stabilizes bases of the 16S rRNA that are involved in tRNA selection in the A site and with the mRNA backbone. Located at the interface of the 30S and 50S subunits, it traverses the body of the 30S subunit contacting proteins on the other side and probably holding the rRNA structure together. The combined cluster of proteins S8, S12 and S17 appears to hold together the shoulder and platform of the 30S subunit. The protein is Small ribosomal subunit protein uS12 of Beutenbergia cavernae (strain ATCC BAA-8 / DSM 12333 / CCUG 43141 / JCM 11478 / NBRC 16432 / NCIMB 13614 / HKI 0122).